A 96-amino-acid polypeptide reads, in one-letter code: Salivary protein FS50 (96 aa).

A signal peptide spans 1–19 (MKWILVLALVCLAVEYSYS). Disulfide bonds link cysteine 26-cysteine 71, cysteine 50-cysteine 78, cysteine 63-cysteine 91, and cysteine 67-cysteine 93.

Its subcellular location is the secreted. Salivary protein that inhibits host voltage-gated sodium channel Nav1.5/SCN5A. The chain is Salivary protein FS50 from Xenopsylla cheopis (Oriental rat flea).